Reading from the N-terminus, the 397-residue chain is ATP-dependent RNA helicase RhlB (397 aa).

The Q motif signature appears at 9–37 (TRFHDFNLAPSLMHAIHDLGFPYCTPIQA). The region spanning 40-220 (LGFTLRGQDA…KQWTVDPAIV (181 aa)) is the Helicase ATP-binding domain. Position 53–60 (53–60 (AQTGTGKT)) interacts with ATP. Residues 166-169 (DEAD) carry the DEAD box motif. Positions 243 to 393 (DKYKLLYNLV…MPPAELLKPV (151 aa)) constitute a Helicase C-terminal domain.

Belongs to the DEAD box helicase family. RhlB subfamily. As to quaternary structure, component of the RNA degradosome, which is a multiprotein complex involved in RNA processing and mRNA degradation.

It localises to the cytoplasm. The enzyme catalyses ATP + H2O = ADP + phosphate + H(+). Its function is as follows. DEAD-box RNA helicase involved in RNA degradation. Has RNA-dependent ATPase activity and unwinds double-stranded RNA. This Pseudomonas aeruginosa (strain UCBPP-PA14) protein is ATP-dependent RNA helicase RhlB.